We begin with the raw amino-acid sequence, 290 residues long: Signal peptidase I (290 aa).

Over 1–13 (MKFLRSVYAFCSS) the chain is Cytoplasmic. The chain crosses the membrane as a helical span at residues 14–34 (WVGTIIIVLLVIFFIAQAFII). The Extracellular portion of the chain corresponds to 35-290 (PSRSMVGTLY…KIIKKEKATH (256 aa)). Residues serine 38 and lysine 106 contribute to the active site.

The protein belongs to the peptidase S26 family.

The protein localises to the cell membrane. It catalyses the reaction Cleavage of hydrophobic, N-terminal signal or leader sequences from secreted and periplasmic proteins.. In Helicobacter pylori (strain J99 / ATCC 700824) (Campylobacter pylori J99), this protein is Signal peptidase I (lepB).